We begin with the raw amino-acid sequence, 471 residues long: Putative multidrug resistance protein MdtD (471 aa).

Transmembrane regions (helical) follow at residues 12–32, 49–69, 77–97, 102–124, 138–158, 165–185, 195–215, 220–240, 263–283, 286–306, 329–351, 393–413, and 431–451; these read LWIVAFGFFMQSLDTTIVNTA, MIIVSYVLTVAVMLPASGWLA, IFFTAIVLFTAGSLFCAQAST, VMARVLQGVGGAMMVPVGRLTVM, FVTLPGQVGPLLGPALGGVLV, WIFLINIPVGIVGAIATLCLM, FDLSGFLLLAAGMATLTLALD, LGISPAWLAGLVAVGLCALLL, FSLGLGGSFAGRIGSGMLPFM, VFLQIGLGFSPFHAGLMMIPM, VLVASTLGLAAVSLLFMFSALAG, LLSMVMQLSMSIGVTIAGLLL, and VFLYTYLSMAAIIALPALIFS.

The protein belongs to the major facilitator superfamily. TCR/Tet family.

Its subcellular location is the cell inner membrane. In Klebsiella pneumoniae subsp. pneumoniae (strain ATCC 700721 / MGH 78578), this protein is Putative multidrug resistance protein MdtD.